Reading from the N-terminus, the 443-residue chain is Ribosomal protein uS12 methylthiotransferase RimO (443 aa).

In terms of domain architecture, MTTase N-terminal spans 8–118; sequence PKVGFVSLGC…VVNAVHEVVP (111 aa). [4Fe-4S] cluster contacts are provided by Cys17, Cys53, Cys82, Cys151, Cys155, and Cys158. One can recognise a Radical SAM core domain in the interval 137–375; it reads LTPRHYAYLK…MAHQQAISTA (239 aa). In terms of domain architecture, TRAM spans 378–443; the sequence is QLRIGKEIEV…DEYDMWAEPI (66 aa).

The protein belongs to the methylthiotransferase family. RimO subfamily. It depends on [4Fe-4S] cluster as a cofactor.

It localises to the cytoplasm. The enzyme catalyses L-aspartate(89)-[ribosomal protein uS12]-hydrogen + (sulfur carrier)-SH + AH2 + 2 S-adenosyl-L-methionine = 3-methylsulfanyl-L-aspartate(89)-[ribosomal protein uS12]-hydrogen + (sulfur carrier)-H + 5'-deoxyadenosine + L-methionine + A + S-adenosyl-L-homocysteine + 2 H(+). Its function is as follows. Catalyzes the methylthiolation of an aspartic acid residue of ribosomal protein uS12. This Pseudomonas putida (strain GB-1) protein is Ribosomal protein uS12 methylthiotransferase RimO.